The chain runs to 262 residues: tRNA pseudouridine synthase A (262 aa).

The active-site Nucleophile is the aspartate 56. Residue tyrosine 114 coordinates substrate.

The protein belongs to the tRNA pseudouridine synthase TruA family. In terms of assembly, homodimer.

The enzyme catalyses uridine(38/39/40) in tRNA = pseudouridine(38/39/40) in tRNA. Formation of pseudouridine at positions 38, 39 and 40 in the anticodon stem and loop of transfer RNAs. This Lactiplantibacillus plantarum (strain ATCC BAA-793 / NCIMB 8826 / WCFS1) (Lactobacillus plantarum) protein is tRNA pseudouridine synthase A.